Consider the following 1321-residue polypeptide: Bile salt export pump (1321 aa).

Residues 1–62 (MSDSVILRSI…FSSSTDIWLM (62 aa)) lie on the Cytoplasmic side of the membrane. The segment at 16-37 (ENDGFESDKSYNNDKKSRLQDE) is disordered. Basic and acidic residues predominate over residues 21-37 (ESDKSYNNDKKSRLQDE). Residues 62-385 (MFVGSLCAFL…ASPCLEAFAT (324 aa)) form the ABC transmembrane type-1 1 domain. The chain crosses the membrane as a helical span at residues 63–83 (FVGSLCAFLHGIAQPGVLLIF). At 84 to 147 (GTMTDVFIDY…MIKFASYYAG (64 aa)) the chain is on the extracellular side. 4 N-linked (GlcNAc...) asparagine glycosylation sites follow: Asn109, Asn116, Asn122, and Asn125. Residues 148–168 (IAVAVLITGYIQICFWVIAAA) traverse the membrane as a helical segment. The Cytoplasmic segment spans residues 169 to 215 (RQIQKMRKFYFRRIMRMEIGWFDCNSVGELNTRFSDDINKINDAIAD). A helical membrane pass occupies residues 216 to 236 (QMALFIQRMTSTICGFLLGFF). Over 237 to 240 (RGWK) the chain is Extracellular. The helical transmembrane segment at 241-261 (LTLVIISVSPLIGIGAATIGL) threads the bilayer. At 262–319 (SVSKFTDYELKAYAKAGVVADEVISSMRTVAAFGGEKREVERYEKNLVFAQRWGIRKG) the chain is on the cytoplasmic side. Residues 320–340 (IVMGFFTGFVWCLIFLCYALA) traverse the membrane as a helical segment. Over 341 to 353 (FWYGSTLVLDEGE) the chain is Extracellular. A helical membrane pass occupies residues 354 to 374 (YTPGTLVQIFLSVIVGALNLG). Topologically, residues 375-755 (NASPCLEAFA…KFSAPEWPYM (381 aa)) are cytoplasmic. An ABC transporter 1 domain is found at 420 to 656 (IEFHNVTFHY…KGVYFTLVTL (237 aa)). 455-462 (GPSGAGKS) contacts ATP. A Phosphothreonine modification is found at Thr586. A Phosphoserine modification is found at Ser587. An interaction with HAX1 region spans residues 651–672 (FTLVTLQSQGNQALNEEDIKDA). Residues Ser690, Ser701, and Ser704 each carry the phosphoserine modification. Positions 755 to 1043 (MLVGSVGAAV…AFSYTPSYAK (289 aa)) constitute an ABC transmembrane type-1 2 domain. The helical transmembrane segment at 756-776 (LVGSVGAAVNGTVTPLYAFLF) threads the bilayer. Residues 777–794 (SQILGTFSIPDKEEQRSQ) are Extracellular-facing. Residues 795 to 815 (INGVCLLFVAMGCVSLFTQFL) form a helical membrane-spanning segment. The Cytoplasmic portion of the chain corresponds to 816–869 (QGYAFAKSGELLTKRLRKFGFRAMLGQDIAWFDDLRNSPGALTTRLATDASQVQ). Transmembrane regions (helical) follow at residues 870 to 890 (GAAG…TVAM) and 891 to 911 (IIAF…FPFL). The Cytoplasmic segment spans residues 912 to 979 (ALSGATQTRM…PFKTAIQKAN (68 aa)). A helical membrane pass occupies residues 980–1000 (IYGFCFAFAQCIMFIANSASY). Over 1001 to 1011 (RYGGYLISNEG) the chain is Extracellular. A helical transmembrane segment spans residues 1012-1032 (LHFSYVFRVISAVVLSATALG). At 1033–1321 (RAFSYTPSYA…KLVTTGSPIS (289 aa)) the chain is on the cytoplasmic side. The region spanning 1078–1316 (IDFVDCKFTY…KGAYYKLVTT (239 aa)) is the ABC transporter 2 domain. 1113–1120 (GSSGCGKS) lines the ATP pocket. Ser1214 carries the phosphoserine modification. The segment at 1311-1314 (YKLV) is mediates internalization from the plasma membrane. Phosphoserine is present on Ser1321.

It belongs to the ABC transporter superfamily. ABCB family. Multidrug resistance exporter (TC 3.A.1.201) subfamily. Interacts with HAX1. Interacts with the adapter protein complex 2 (AP-2) throught AP2A2 or AP2A1; this interaction regulates cell membrane expression of ABCB11 through its internalization in a clathrin-dependent manner and its subsequent degradation. Post-translationally, N-glycosylated. Ubiquitinated; short-chain ubiquitination regulates cell-Surface expression of ABCB11. As to expression, expressed predominantly, if not exclusively in the liver, where it was further localized to the canalicular microvilli and to subcanalicular vesicles of the hepatocytes by in situ.

The protein localises to the apical cell membrane. The protein resides in the recycling endosome membrane. Its subcellular location is the endosome. It localises to the cell membrane. It carries out the reaction cholate(in) + ATP + H2O = cholate(out) + ADP + phosphate + H(+). The enzyme catalyses taurocholate(in) + ATP + H2O = taurocholate(out) + ADP + phosphate + H(+). The catalysed reaction is glycocholate(in) + ATP + H2O = glycocholate(out) + ADP + phosphate + H(+). It catalyses the reaction glycochenodeoxycholate(in) + ATP + H2O = glycochenodeoxycholate(out) + ADP + phosphate + H(+). It carries out the reaction taurochenodeoxycholate(in) + ATP + H2O = taurochenodeoxycholate(out) + ADP + phosphate + H(+). The enzyme catalyses glycoursodeoxycholate(in) + ATP + H2O = glycoursodeoxycholate(out) + ADP + phosphate + H(+). The catalysed reaction is tauroursodeoxycholate(in) + ATP + H2O = tauroursodeoxycholate(out) + ADP + phosphate + H(+). It catalyses the reaction taurodeoxycholate(in) + ATP + H2O = taurodeoxycholate(out) + ADP + phosphate + H(+). It carries out the reaction taurolithocholate 3-sulfate(in) + ATP + H2O = taurolithocholate 3-sulfate(out) + ADP + phosphate + H(+). The enzyme catalyses pravastatin(in) + ATP + H2O = pravastatin(out) + ADP + phosphate + H(+). With respect to regulation, the uptake of taurocholate is inhibited by taurolithocholate sulfate with an IC(50) of 9 uM. Pravastatin competitively inhibits the transport of taurocholic acid. Cyclosporin A, glibenclamide, rifampicin and troglitazonestrongly competitively inhibit the transport activity of taurocholate. The canalicular transport activity of taurocholate is strongly dependent on canalicular membrane cholesterol content. The uptake of taurocholate is increased by short- and medium-chain fatty acids. Cholesterol increases transport capacity of taurocholate without affecting the affinity for the substrate. Catalyzes the transport of the major hydrophobic bile salts, such as taurine and glycine-conjugated cholic acid across the canalicular membrane of hepatocytes in an ATP-dependent manner, therefore participates in hepatic bile acid homeostasis and consequently to lipid homeostasis through regulation of biliary lipid secretion in a bile salts dependent manner. Transports taurine-conjugated bile salts more rapidly than glycine-conjugated bile salts. Also transports non-bile acid compounds, such as pravastatin and fexofenadine in an ATP-dependent manner and may be involved in their biliary excretion. The protein is Bile salt export pump of Homo sapiens (Human).